The primary structure comprises 626 residues: Methanol dehydrogenase [cytochrome c] subunit 1 (626 aa).

The first 27 residues, 1 to 27 (MSRFVTSVSALAMLALAPAALSSGAYA), serve as a signal peptide directing secretion. A disulfide bond links Cys130 and Cys131. Ca(2+) is bound by residues Glu204 and Asn288. Asp330 acts as the Proton acceptor in catalysis. Cys413 and Cys442 are joined by a disulfide.

It belongs to the bacterial PQQ dehydrogenase family. In terms of assembly, heterotetramer composed of 2 alpha and 2 beta subunits. Pyrroloquinoline quinone is required as a cofactor. Ca(2+) serves as cofactor.

The protein localises to the cell inner membrane. The enzyme catalyses 2 Fe(III)-[cytochrome cL] + a primary alcohol = 2 Fe(II)-[cytochrome cL] + an aldehyde + 2 H(+). Functionally, catalyzes the oxidation of primary alcohols including methanol. The chain is Methanol dehydrogenase [cytochrome c] subunit 1 (moxF) from Methylorubrum extorquens (strain ATCC 14718 / DSM 1338 / JCM 2805 / NCIMB 9133 / AM1) (Methylobacterium extorquens).